The sequence spans 155 residues: MAEVESFSLDHTKVKAPYVRLAGRKALAGGVVEKYDLRLAQPNREALPTGALHTLEHLLAGYLRDHLPGVIDLSPMGCRTGFYLVVEGPVGEEKVLEAFAQALKDVLAHEGEVPGASFRECGNYRDHDLPGAKAWAEKVLKAGLRVQATVPLEAR.

The Fe cation site is built by His-53, His-57, and Cys-121.

This sequence belongs to the LuxS family. In terms of assembly, homodimer. Fe cation serves as cofactor.

It carries out the reaction S-(5-deoxy-D-ribos-5-yl)-L-homocysteine = (S)-4,5-dihydroxypentane-2,3-dione + L-homocysteine. Its function is as follows. Involved in the synthesis of autoinducer 2 (AI-2) which is secreted by bacteria and is used to communicate both the cell density and the metabolic potential of the environment. The regulation of gene expression in response to changes in cell density is called quorum sensing. Catalyzes the transformation of S-ribosylhomocysteine (RHC) to homocysteine (HC) and 4,5-dihydroxy-2,3-pentadione (DPD). The chain is S-ribosylhomocysteine lyase from Thermus thermophilus (strain ATCC BAA-163 / DSM 7039 / HB27).